Consider the following 805-residue polypeptide: Hypoxia-inducible factor 1-alpha (805 aa).

The disordered stretch occupies residues M1–A26. A compositionally biased stretch (basic and acidic residues) spans S8–A26. The bHLH domain occupies R17 to E70. PAS domains are found at residues D85 to K157 and P229 to Q300. Residues T303–V346 form the PAC domain. 4-hydroxyproline occurs at positions 404 and 560. The disordered stretch occupies residues K628–L669. A compositionally biased stretch (polar residues) spans E629–P648. N782 carries the post-translational modification (3S)-3-hydroxyasparagine.

In terms of assembly, efficient DNA binding requires heterodimerization of an alpha and a beta/ARNT subunit. In normoxia, is hydroxylated on Pro-404 and Pro-560. The hydroxylated prolines promote interaction with VHL, initiating rapid ubiquitination and subsequent proteasomal degradation. Under hypoxia, proline hydroxylation is impaired and ubiquitination is attenuated, resulting in stabilization. In terms of processing, in normoxia, is hydroxylated on Asn-782, thus abrogating interaction with CREBBP and EP300 and preventing transcriptional activation. Post-translationally, the iron and 2-oxoglutarate dependent 3-hydroxylation of asparagine is (S) stereospecific within HIF CTAD domains.

The protein resides in the cytoplasm. It localises to the nucleus. It is found in the nucleus speckle. Its activity is regulated as follows. Induced by reactive oxygen species (ROS). In terms of biological role, functions as a master transcriptional regulator of the adaptive response to hypoxia. Under hypoxic conditions, activates the transcription of over 40 genes, including erythropoietin, glucose transporters, glycolytic enzymes, vascular endothelial growth factor, HILPDA, and other genes whose protein products increase oxygen delivery or facilitate metabolic adaptation to hypoxia. Plays an essential role in embryonic vascularization, tumor angiogenesis and pathophysiology of ischemic disease. This Xenopus laevis (African clawed frog) protein is Hypoxia-inducible factor 1-alpha (hif1a).